The sequence spans 362 residues: uncharacterized protein (362 aa).

Position 2 is an N-acetylalanine (Ala2).

Belongs to the Gfo/Idh/MocA family. As to quaternary structure, homodimer.

This is an uncharacterized protein from Arabidopsis thaliana (Mouse-ear cress).